Consider the following 60-residue polypeptide: Large ribosomal subunit protein bL32 (60 aa).

The protein belongs to the bacterial ribosomal protein bL32 family.

The chain is Large ribosomal subunit protein bL32 from Clostridium acetobutylicum (strain ATCC 824 / DSM 792 / JCM 1419 / IAM 19013 / LMG 5710 / NBRC 13948 / NRRL B-527 / VKM B-1787 / 2291 / W).